Reading from the N-terminus, the 195-residue chain is Probable GTP-binding protein EngB (195 aa).

Residues 24-195 (GLSEVGLSGR…QIWNVIEKYL (172 aa)) form the EngB-type G domain. Residues 32 to 39 (GRSNVGKS), 59 to 63 (GKTQT), 77 to 80 (DVPG), 144 to 147 (TKED), and 176 to 178 (YSS) contribute to the GTP site. Positions 39 and 61 each coordinate Mg(2+).

Belongs to the TRAFAC class TrmE-Era-EngA-EngB-Septin-like GTPase superfamily. EngB GTPase family. The cofactor is Mg(2+).

In terms of biological role, necessary for normal cell division and for the maintenance of normal septation. This chain is Probable GTP-binding protein EngB, found in Staphylococcus saprophyticus subsp. saprophyticus (strain ATCC 15305 / DSM 20229 / NCIMB 8711 / NCTC 7292 / S-41).